The sequence spans 599 residues: Elongation factor 4 (599 aa).

The tr-type G domain occupies 2–184 (KNIRNFSIIA…RLVRDIPPPE (183 aa)). GTP-binding positions include 14 to 19 (DHGKST) and 131 to 134 (NKID).

It belongs to the TRAFAC class translation factor GTPase superfamily. Classic translation factor GTPase family. LepA subfamily.

It is found in the cell inner membrane. The enzyme catalyses GTP + H2O = GDP + phosphate + H(+). In terms of biological role, required for accurate and efficient protein synthesis under certain stress conditions. May act as a fidelity factor of the translation reaction, by catalyzing a one-codon backward translocation of tRNAs on improperly translocated ribosomes. Back-translocation proceeds from a post-translocation (POST) complex to a pre-translocation (PRE) complex, thus giving elongation factor G a second chance to translocate the tRNAs correctly. Binds to ribosomes in a GTP-dependent manner. The polypeptide is Elongation factor 4 (Klebsiella pneumoniae subsp. pneumoniae (strain ATCC 700721 / MGH 78578)).